A 476-amino-acid chain; its full sequence is 8-amino-7-oxononanoate synthase (476 aa).

Position 24 (Arg-24) interacts with substrate. 171 to 172 (GF) is a binding site for pyridoxal 5'-phosphate. Position 210 (His-210) interacts with substrate. Pyridoxal 5'-phosphate is bound by residues Ser-260, 285-288 (DDAH), and 316-319 (TLSK). Residue Lys-319 is modified to N6-(pyridoxal phosphate)lysine. Thr-427 serves as a coordination point for substrate. Residues 474–476 (PKL) carry the Peroxisomal targeting signal PTS1 motif.

The protein belongs to the class-II pyridoxal-phosphate-dependent aminotransferase family. BioF subfamily. In terms of assembly, monomer. Pyridoxal 5'-phosphate is required as a cofactor.

The protein resides in the cytoplasm. It localises to the cytosol. It is found in the peroxisome. The catalysed reaction is 6-carboxyhexanoyl-[ACP] + L-alanine + H(+) = (8S)-8-amino-7-oxononanoate + holo-[ACP] + CO2. It participates in cofactor biosynthesis; biotin biosynthesis; 8-amino-7-oxononanoate from pimeloyl-CoA: step 1/1. Catalyzes the decarboxylative condensation of pimeloyl-[acyl-carrier protein] and L-alanine to produce 8-amino-7-oxononanoate (AON), [acyl-carrier protein], and carbon dioxide. Required for the biosynthesis of D-biotin that prevents light-mediated cell death and modulates defense gene expression, probably by avoiding hydrogen peroxide H(2)O(2) accumulation. This chain is 8-amino-7-oxononanoate synthase, found in Arabidopsis thaliana (Mouse-ear cress).